A 288-amino-acid polypeptide reads, in one-letter code: Putative N-terminal acetyltransferase 2 (288 aa).

Residues 68–90 (TEEKSSQFDENKSKSNNGKKNEP) are disordered.

In terms of assembly, heterooligomeric.

Its subcellular location is the cytoplasm. Functionally, maybe involved in N-terminal acetylation of proteins. N-acetylation plays a role in normal eukaryotic translation and processing, protect against proteolytic degradation and protein turnover. The polypeptide is Putative N-terminal acetyltransferase 2 (NAT2) (Saccharomyces cerevisiae (strain ATCC 204508 / S288c) (Baker's yeast)).